The sequence spans 397 residues: Elongation factor Tu (397 aa).

The 198-residue stretch at 10-207 folds into the tr-type G domain; it reads LPHVNVGTIG…TLDSYIPEPV (198 aa). The segment at 19 to 26 is G1; it reads GHVDHGKT. A GTP-binding site is contributed by 19 to 26; the sequence is GHVDHGKT. Thr-26 contacts Mg(2+). Residues 60–64 form a G2 region; it reads GITIN. The G3 stretch occupies residues 81–84; sequence DCPG. Residues 81–85 and 136–139 each bind GTP; these read DCPGH and NKAD. The tract at residues 136–139 is G4; the sequence is NKAD. Residues 174–176 form a G5 region; that stretch reads SAR.

The protein belongs to the TRAFAC class translation factor GTPase superfamily. Classic translation factor GTPase family. EF-Tu/EF-1A subfamily. As to quaternary structure, monomer.

It is found in the cytoplasm. It carries out the reaction GTP + H2O = GDP + phosphate + H(+). GTP hydrolase that promotes the GTP-dependent binding of aminoacyl-tRNA to the A-site of ribosomes during protein biosynthesis. In Pseudomonas putida (strain ATCC 700007 / DSM 6899 / JCM 31910 / BCRC 17059 / LMG 24140 / F1), this protein is Elongation factor Tu.